A 142-amino-acid polypeptide reads, in one-letter code: DNA-directed RNA polymerase II subunit RPB4 (142 aa).

It belongs to the eukaryotic RPB4 RNA polymerase subunit family. Component of the RNA polymerase II (Pol II) core complex consisting of 12 subunits: a ten-subunit catalytic core composed of POLR2A/RPB1, POLR2B/RPB2, POLR2C/RPB3, POLR2I/RPB9, POLR2J/RPB11, POLR2E/RPABC1, POLR2F/RPABC2, POLR2H/RPABC3, POLR2K/RPABC4 and POLR2L/RPABC5 and a mobile stalk composed of two subunits POLR2D/RPB4 and POLR2G/RPB7, protruding from the core and functioning primarily in transcription initiation. Part of Pol II(G) complex, in which Pol II core associates with an additional subunit POLR2M; unlike conventional Pol II, Pol II(G) functions as a transcriptional repressor. Part of TBP-based Pol II pre-initiation complex (PIC), in which Pol II core assembles with general transcription factors and other specific initiation factors including GTF2E1, GTF2E2, GTF2F1, GTF2F2, TCEA1, ERCC2, ERCC3, GTF2H2, GTF2H3, GTF2H4, GTF2H5, GTF2A1, GTF2A2, GTF2B and TBP; this large multi-subunit PIC complex mediates DNA unwinding and targets Pol II core to the transcription start site where the first phosphodiester bond forms.

It is found in the nucleus. Core component of RNA polymerase II (Pol II), a DNA-dependent RNA polymerase which synthesizes mRNA precursors and many functional non-coding RNAs using the four ribonucleoside triphosphates as substrates. Pol II is the central component of the basal RNA polymerase II transcription machinery. It is composed of mobile elements that move relative to each other. POLR2D/RPB4 is part of a subcomplex with POLR2G/RPB7 that binds to a pocket formed by POLR2A/RPB1, POLR2B/RPB2 and POLR2F/RPABC2 at the base of the clamp element. The POLR2D/RPB4-POLR2G/RPB7 subcomplex seems to lock the clamp via POLR2G/RPB7 in the closed conformation thus preventing double-stranded DNA to enter the active site cleft. The POLR2D/RPB4-POLR2G/RPB7 subcomplex binds single-stranded DNA and RNA. This Homo sapiens (Human) protein is DNA-directed RNA polymerase II subunit RPB4 (POLR2D).